Consider the following 647-residue polypeptide: UvrABC system protein C (647 aa).

A GIY-YIG domain is found at 26-106; it reads SEPGCYLMRD…IKEHQPYFNI (81 aa). In terms of domain architecture, UVR spans 216-251; the sequence is DQLKDLLHKQMLIQSKLQEFEKAAIIRDQIKGIEQL.

The protein belongs to the UvrC family. Interacts with UvrB in an incision complex.

Its subcellular location is the cytoplasm. The UvrABC repair system catalyzes the recognition and processing of DNA lesions. UvrC both incises the 5' and 3' sides of the lesion. The N-terminal half is responsible for the 3' incision and the C-terminal half is responsible for the 5' incision. In Prochlorococcus marinus (strain MIT 9211), this protein is UvrABC system protein C.